We begin with the raw amino-acid sequence, 508 residues long: CBL-interacting protein kinase 19 (508 aa).

The interval 1 to 24 is disordered; the sequence is MAATPPSSQHRRPLSSSASAASLA. Residues 14 to 24 are compositionally biased toward low complexity; that stretch reads LSSSASAASLA. The Protein kinase domain maps to 37–291; sequence YELGRLLGHG…VKEVMESRWF (255 aa). Residues 43–51 and lysine 66 each bind ATP; that span reads LGHGTFAKV. The active-site Proton acceptor is the aspartate 159. The tract at residues 177 to 206 is activation loop; it reads DFGLSAVADQFHPDGLLHTFCGTPSYVAPE. The tract at residues 311–372 is disordered; that stretch reads ADGDNDMPEL…EERRQRPLGS (62 aa). Acidic residues predominate over residues 313–322; that stretch reads GDNDMPELEP. A compositionally biased stretch (pro residues) spans 323–337; it reads SEPPPPPPFPPPPPQ. Residues 338–347 show a composition bias toward acidic residues; it reads QDDDGEESGW. Residues 354–398 enclose the NAF domain; the sequence is ASCPATLSSEERRQRPLGSLTRPASLNAFDIISFSKGFDLSGLFE. The segment at 401–430 is PPI; that stretch reads GSEVRFISAEPMQTIITKLEEIAKVKSFFV.

Belongs to the protein kinase superfamily. CAMK Ser/Thr protein kinase family. SNF1 subfamily. Mn(2+) is required as a cofactor. In terms of processing, autophosphorylated. Expressed in roots, leaf blades and sheaths and panicles.

The enzyme catalyses L-seryl-[protein] + ATP = O-phospho-L-seryl-[protein] + ADP + H(+). The catalysed reaction is L-threonyl-[protein] + ATP = O-phospho-L-threonyl-[protein] + ADP + H(+). CIPK serine-threonine protein kinases interact with CBL proteins. Binding of a CBL protein to the regulatory NAF domain of CIPK protein lead to the activation of the kinase in a calcium-dependent manner. This is CBL-interacting protein kinase 19 (CIPK19) from Oryza sativa subsp. japonica (Rice).